The chain runs to 1182 residues: DNA-directed RNA polymerase subunit beta (1182 aa).

The span at 1150-1162 (DEEVEMKDEDDDN) shows a compositional bias: acidic residues. The segment at 1150–1182 (DEEVEMKDEDDDNIPNATSALEQVVQPTVTEEE) is disordered. Residues 1171–1182 (EQVVQPTVTEEE) are compositionally biased toward low complexity.

This sequence belongs to the RNA polymerase beta chain family. As to quaternary structure, the RNAP catalytic core consists of 2 alpha, 1 beta, 1 beta' and 1 omega subunit. When a sigma factor is associated with the core the holoenzyme is formed, which can initiate transcription.

The enzyme catalyses RNA(n) + a ribonucleoside 5'-triphosphate = RNA(n+1) + diphosphate. In terms of biological role, DNA-dependent RNA polymerase catalyzes the transcription of DNA into RNA using the four ribonucleoside triphosphates as substrates. The chain is DNA-directed RNA polymerase subunit beta from Exiguobacterium sp. (strain ATCC BAA-1283 / AT1b).